Here is a 181-residue protein sequence, read N- to C-terminus: Ribonuclease HII (181 aa).

The RNase H type-2 domain occupies 1 to 181 (MICGIDEVGR…SLHRKNFKLI (181 aa)). Residues Asp6, Glu7, and Asp98 each contribute to the a divalent metal cation site.

The protein belongs to the RNase HII family. It depends on Mn(2+) as a cofactor. The cofactor is Mg(2+).

The protein localises to the cytoplasm. It catalyses the reaction Endonucleolytic cleavage to 5'-phosphomonoester.. Its function is as follows. Endonuclease that specifically degrades the RNA of RNA-DNA hybrids. The protein is Ribonuclease HII (rnhB) of Borreliella burgdorferi (strain ATCC 35210 / DSM 4680 / CIP 102532 / B31) (Borrelia burgdorferi).